Consider the following 579-residue polypeptide: 2-succinyl-5-enolpyruvyl-6-hydroxy-3-cyclohexene-1-carboxylate synthase (579 aa).

Belongs to the TPP enzyme family. MenD subfamily. In terms of assembly, homodimer. The cofactor is Mg(2+). Mn(2+) is required as a cofactor. It depends on thiamine diphosphate as a cofactor.

It carries out the reaction isochorismate + 2-oxoglutarate + H(+) = 5-enolpyruvoyl-6-hydroxy-2-succinyl-cyclohex-3-ene-1-carboxylate + CO2. It participates in quinol/quinone metabolism; 1,4-dihydroxy-2-naphthoate biosynthesis; 1,4-dihydroxy-2-naphthoate from chorismate: step 2/7. It functions in the pathway quinol/quinone metabolism; menaquinone biosynthesis. Functionally, catalyzes the thiamine diphosphate-dependent decarboxylation of 2-oxoglutarate and the subsequent addition of the resulting succinic semialdehyde-thiamine pyrophosphate anion to isochorismate to yield 2-succinyl-5-enolpyruvyl-6-hydroxy-3-cyclohexene-1-carboxylate (SEPHCHC). This Shewanella frigidimarina (strain NCIMB 400) protein is 2-succinyl-5-enolpyruvyl-6-hydroxy-3-cyclohexene-1-carboxylate synthase.